The chain runs to 103 residues: Large ribosomal subunit protein bL28 (103 aa).

Belongs to the bacterial ribosomal protein bL28 family.

The sequence is that of Large ribosomal subunit protein bL28 from Anaplasma phagocytophilum (strain HZ).